The following is a 131-amino-acid chain: Large ribosomal subunit protein bL12 (131 aa).

Belongs to the bacterial ribosomal protein bL12 family. As to quaternary structure, homodimer. Part of the ribosomal stalk of the 50S ribosomal subunit. Forms a multimeric L10(L12)X complex, where L10 forms an elongated spine to which 2 to 4 L12 dimers bind in a sequential fashion. Binds GTP-bound translation factors.

Functionally, forms part of the ribosomal stalk which helps the ribosome interact with GTP-bound translation factors. Is thus essential for accurate translation. The sequence is that of Large ribosomal subunit protein bL12 from Prochlorococcus marinus (strain NATL1A).